The sequence spans 865 residues: Alanine--tRNA ligase (865 aa).

Zn(2+) contacts are provided by His554, His558, Cys656, and His660.

It belongs to the class-II aminoacyl-tRNA synthetase family. Zn(2+) serves as cofactor.

The protein localises to the cytoplasm. The catalysed reaction is tRNA(Ala) + L-alanine + ATP = L-alanyl-tRNA(Ala) + AMP + diphosphate. Catalyzes the attachment of alanine to tRNA(Ala) in a two-step reaction: alanine is first activated by ATP to form Ala-AMP and then transferred to the acceptor end of tRNA(Ala). Also edits incorrectly charged Ser-tRNA(Ala) and Gly-tRNA(Ala) via its editing domain. The chain is Alanine--tRNA ligase from Francisella philomiragia subsp. philomiragia (strain ATCC 25017 / CCUG 19701 / FSC 153 / O#319-036).